The sequence spans 266 residues: Putative pyruvate, phosphate dikinase regulatory protein (266 aa).

An ADP-binding site is contributed by 147 to 154 (GLSRTSKT).

It belongs to the pyruvate, phosphate/water dikinase regulatory protein family. PDRP subfamily.

The enzyme catalyses N(tele)-phospho-L-histidyl/L-threonyl-[pyruvate, phosphate dikinase] + ADP = N(tele)-phospho-L-histidyl/O-phospho-L-threonyl-[pyruvate, phosphate dikinase] + AMP + H(+). It catalyses the reaction N(tele)-phospho-L-histidyl/O-phospho-L-threonyl-[pyruvate, phosphate dikinase] + phosphate + H(+) = N(tele)-phospho-L-histidyl/L-threonyl-[pyruvate, phosphate dikinase] + diphosphate. In terms of biological role, bifunctional serine/threonine kinase and phosphorylase involved in the regulation of the pyruvate, phosphate dikinase (PPDK) by catalyzing its phosphorylation/dephosphorylation. The polypeptide is Putative pyruvate, phosphate dikinase regulatory protein (Clostridium perfringens (strain 13 / Type A)).